We begin with the raw amino-acid sequence, 577 residues long: Arginine--tRNA ligase (577 aa).

The short motif at 122 to 132 (PNVAKEMHVGH) is the 'HIGH' region element.

It belongs to the class-I aminoacyl-tRNA synthetase family. As to quaternary structure, monomer.

It is found in the cytoplasm. The catalysed reaction is tRNA(Arg) + L-arginine + ATP = L-arginyl-tRNA(Arg) + AMP + diphosphate. The polypeptide is Arginine--tRNA ligase (Salmonella choleraesuis (strain SC-B67)).